The primary structure comprises 104 residues: MEQIAFRMQLDPAQAAEYERRHDEIWPELVAALKDAGISDYSIFLDLSDGSLFAVLRRRPGHAMDALPEQAVMRRWWQAMADIMRTNPDASPTASPLRRVFHLP.

Y18 serves as a coordination point for substrate. The active-site Proton donor is the H22. Substrate-binding positions include Y41 and W76–W77.

It belongs to the rhamnose mutarotase family. In terms of assembly, homodimer.

Its subcellular location is the cytoplasm. It carries out the reaction alpha-L-rhamnose = beta-L-rhamnose. It functions in the pathway carbohydrate metabolism; L-rhamnose metabolism. In terms of biological role, involved in the anomeric conversion of L-rhamnose. This chain is L-rhamnose mutarotase, found in Acidiphilium cryptum (strain JF-5).